Here is a 459-residue protein sequence, read N- to C-terminus: Transcription factor mlcR (459 aa).

Residues 21–53 constitute a DNA-binding region (zn(2)-C6 fungal-type); the sequence is CDRCHAQKLKCTGSNANLVRAQCQRCQQAGLRC. 2 disordered regions span residues 64-84 and 135-170; these read LHKE…PMTA and DPES…DFEG. Positions 69–78 are enriched in low complexity; it reads AAGTTRATET.

Its subcellular location is the nucleus. Its function is as follows. Transcription factor that regulates the gene cluster that mediates the biosynthesis of compactin, also known as mevastatin or ML-236B, and which acts as a potent competitive inhibitor of HMG-CoA reductase. Binds to the consensus-binding motif 5'-WCGG-N(6)-TCGG-3' of target genes. This chain is Transcription factor mlcR, found in Penicillium citrinum.